We begin with the raw amino-acid sequence, 226 residues long: Glutathione S-transferase kappa 1 (226 aa).

S16–Y18 contributes to the glutathione binding site. K49 is modified (N6-succinyllysine). N53 is a glutathione binding site. N6-acetyllysine occurs at positions 71 and 85. N6-acetyllysine; alternate is present on K116. K116 is modified (N6-succinyllysine; alternate). At K144 the chain carries N6-succinyllysine. K158 carries the post-translational modification N6-acetyllysine; alternate. At K158 the chain carries N6-succinyllysine; alternate. 2 positions are modified to N6-acetyllysine: K165 and K169. Glutathione is bound by residues L183 and S200–D201.

It belongs to the GST superfamily. Kappa family. Homodimer. Ubiquitous.

Its subcellular location is the peroxisome. It catalyses the reaction RX + glutathione = an S-substituted glutathione + a halide anion + H(+). In terms of biological role, glutathione S-transferase that catalyzes the conjugation of glutathione to exogenous and endogenous compounds. Significant glutathione conjugating activity is found only with the model substrate, 1-chloro-2,4-dinitrobenzene (CDNB). This Homo sapiens (Human) protein is Glutathione S-transferase kappa 1 (GSTK1).